The primary structure comprises 733 residues: Wall-associated receptor kinase 5 (733 aa).

The first 23 residues, 1 to 23 (MKVHSLFLMAIFFYLAYTQLVKA), serve as a signal peptide directing secretion. The Extracellular segment spans residues 24 to 330 (QPRDDCQTRC…IDTPKEEPKY (307 aa)). 9 N-linked (GlcNAc...) asparagine glycosylation sites follow: asparagine 57, asparagine 77, asparagine 110, asparagine 137, asparagine 184, asparagine 206, asparagine 218, asparagine 232, and asparagine 247. The region spanning 231-278 (GNQTCEQVVGRNICGGNSTCFDSTRGKGYNCKCLQGFDGNPYLSDGCQ) is the EGF-like 1 domain. 6 disulfide bridges follow: cysteine 235–cysteine 250, cysteine 244–cysteine 261, cysteine 263–cysteine 277, cysteine 283–cysteine 296, cysteine 290–cysteine 305, and cysteine 307–cysteine 320. Residues 279-321 (DINECTTRIHNCSDTSTCENTLGSFHCQCPSGSDLNTTTMSCI) form the EGF-like 2; calcium-binding domain. Residue asparagine 289 is glycosylated (N-linked (GlcNAc...) asparagine). An N-linked (GlcNAc...) asparagine glycan is attached at asparagine 314. Residues 331 to 351 (LGWTTVLLGTTIGFLIILLTI) form a helical membrane-spanning segment. Topologically, residues 352 to 733 (SYIQQKMRHR…VTRLDIETGR (382 aa)) are cytoplasmic. Position 397 is a phosphothreonine (threonine 397). One can recognise a Protein kinase domain in the interval 408–691 (YNESRILGQG…RVKTTKHQWS (284 aa)). Residues 414 to 422 (LGQGGQGTV) and lysine 436 contribute to the ATP site. Tyrosine 481 bears the Phosphotyrosine mark. Aspartate 533 functions as the Proton acceptor in the catalytic mechanism. Residues threonine 567 and threonine 572 each carry the phosphothreonine modification. Tyrosine 580 bears the Phosphotyrosine mark.

This sequence belongs to the protein kinase superfamily. Ser/Thr protein kinase family. In terms of tissue distribution, predominantly expressed in green tissues such as stems and leaves.

Its subcellular location is the membrane. The enzyme catalyses L-seryl-[protein] + ATP = O-phospho-L-seryl-[protein] + ADP + H(+). It catalyses the reaction L-threonyl-[protein] + ATP = O-phospho-L-threonyl-[protein] + ADP + H(+). In terms of biological role, serine/threonine-protein kinase that may function as a signaling receptor of extracellular matrix component. Binding to pectin may have significance in the control of cell expansion, morphogenesis and development. The chain is Wall-associated receptor kinase 5 (WAK5) from Arabidopsis thaliana (Mouse-ear cress).